A 302-amino-acid chain; its full sequence is Recombination-associated protein RdgC (302 aa).

It belongs to the RdgC family.

The protein localises to the cytoplasm. The protein resides in the nucleoid. Functionally, may be involved in recombination. This is Recombination-associated protein RdgC from Actinobacillus pleuropneumoniae serotype 5b (strain L20).